The sequence spans 244 residues: UDP-2,3-diacylglucosamine hydrolase (244 aa).

Residues aspartate 8, histidine 10, aspartate 41, asparagine 79, and histidine 114 each contribute to the Mn(2+) site. Asparagine 79–arginine 80 contacts substrate. Aspartate 122, lysine 164, lysine 167, and histidine 195 together coordinate substrate. Positions 195 and 197 each coordinate Mn(2+).

This sequence belongs to the LpxH family. Requires Mn(2+) as cofactor.

The protein resides in the cell inner membrane. It carries out the reaction UDP-2-N,3-O-bis[(3R)-3-hydroxytetradecanoyl]-alpha-D-glucosamine + H2O = 2-N,3-O-bis[(3R)-3-hydroxytetradecanoyl]-alpha-D-glucosaminyl 1-phosphate + UMP + 2 H(+). It participates in glycolipid biosynthesis; lipid IV(A) biosynthesis; lipid IV(A) from (3R)-3-hydroxytetradecanoyl-[acyl-carrier-protein] and UDP-N-acetyl-alpha-D-glucosamine: step 4/6. Functionally, hydrolyzes the pyrophosphate bond of UDP-2,3-diacylglucosamine to yield 2,3-diacylglucosamine 1-phosphate (lipid X) and UMP by catalyzing the attack of water at the alpha-P atom. Involved in the biosynthesis of lipid A, a phosphorylated glycolipid that anchors the lipopolysaccharide to the outer membrane of the cell. The polypeptide is UDP-2,3-diacylglucosamine hydrolase (Vibrio atlanticus (strain LGP32) (Vibrio splendidus (strain Mel32))).